Here is a 154-residue protein sequence, read N- to C-terminus: 3-hydroxyacyl-[acyl-carrier-protein] dehydratase FabZ (154 aa).

His54 is an active-site residue.

This sequence belongs to the thioester dehydratase family. FabZ subfamily.

It localises to the cytoplasm. The catalysed reaction is a (3R)-hydroxyacyl-[ACP] = a (2E)-enoyl-[ACP] + H2O. In terms of biological role, involved in unsaturated fatty acids biosynthesis. Catalyzes the dehydration of short chain beta-hydroxyacyl-ACPs and long chain saturated and unsaturated beta-hydroxyacyl-ACPs. The polypeptide is 3-hydroxyacyl-[acyl-carrier-protein] dehydratase FabZ (Shewanella baltica (strain OS223)).